Consider the following 169-residue polypeptide: Flagellar biosynthetic protein FliU (169 aa).

It belongs to the FliB family.

Required for the secretion of flagellin and expression of motility. This Salmonella muenchen protein is Flagellar biosynthetic protein FliU (fliU).